We begin with the raw amino-acid sequence, 285 residues long: Large ribosomal subunit protein uL1m (285 aa).

The N-terminal 19 residues, M1–C19, are a transit peptide targeting the mitochondrion.

This sequence belongs to the universal ribosomal protein uL1 family. As to quaternary structure, component of the mitochondrial large ribosomal subunit (mt-LSU). Mature yeast 74S mitochondrial ribosomes consist of a small (37S) and a large (54S) subunit. The 37S small subunit contains a 15S ribosomal RNA (15S mt-rRNA) and 34 different proteins. The 54S large subunit contains a 21S rRNA (21S mt-rRNA) and 46 different proteins.

Its subcellular location is the mitochondrion. In terms of biological role, component of the mitochondrial ribosome (mitoribosome), a dedicated translation machinery responsible for the synthesis of mitochondrial genome-encoded proteins, including at least some of the essential transmembrane subunits of the mitochondrial respiratory chain. The mitoribosomes are attached to the mitochondrial inner membrane and translation products are cotranslationally integrated into the membrane. This Saccharomyces cerevisiae (strain ATCC 204508 / S288c) (Baker's yeast) protein is Large ribosomal subunit protein uL1m (MRPL1).